Reading from the N-terminus, the 132-residue chain is Small ribosomal subunit protein uS8c (132 aa).

The protein belongs to the universal ribosomal protein uS8 family. Part of the 30S ribosomal subunit.

It is found in the plastid. The protein localises to the chloroplast. One of the primary rRNA binding proteins, it binds directly to 16S rRNA central domain where it helps coordinate assembly of the platform of the 30S subunit. This chain is Small ribosomal subunit protein uS8c (rps8), found in Gracilaria tenuistipitata var. liui (Red alga).